The primary structure comprises 190 residues: Imidazoleglycerol-phosphate dehydratase (190 aa).

This sequence belongs to the imidazoleglycerol-phosphate dehydratase family.

Its subcellular location is the cytoplasm. It carries out the reaction D-erythro-1-(imidazol-4-yl)glycerol 3-phosphate = 3-(imidazol-4-yl)-2-oxopropyl phosphate + H2O. The protein operates within amino-acid biosynthesis; L-histidine biosynthesis; L-histidine from 5-phospho-alpha-D-ribose 1-diphosphate: step 6/9. This chain is Imidazoleglycerol-phosphate dehydratase, found in Aliarcobacter butzleri (strain RM4018) (Arcobacter butzleri).